A 164-amino-acid polypeptide reads, in one-letter code: Peptidyl-prolyl cis-trans isomerase A-like 4C (164 aa).

The PPIase cyclophilin-type domain occupies 7–163 (FFDITVDGKP…KKITIADCGQ (157 aa)).

Belongs to the cyclophilin-type PPIase family. PPIase A subfamily.

The protein localises to the cytoplasm. The catalysed reaction is [protein]-peptidylproline (omega=180) = [protein]-peptidylproline (omega=0). PPIases accelerate the folding of proteins. It catalyzes the cis-trans isomerization of proline imidic peptide bonds in oligopeptides. This is Peptidyl-prolyl cis-trans isomerase A-like 4C from Homo sapiens (Human).